The following is a 1563-amino-acid chain: Rab-3-interacting molecule unc-10 (1563 aa).

A RabBD domain is found at 7–133; that stretch reads MPDLSHLSAE…AKTGKWFQPE (127 aa). Residues 25–35 are compositionally biased toward basic and acidic residues; that stretch reads FKRQKDEEAKE. The tract at residues 25 to 50 is disordered; that stretch reads FKRQKDEEAKETQISQKASEELSELD. The segment at 66–121 adopts an FYVE-type zinc-finger fold; the sequence is TQDDAICQICQKTKFADGIGHKCFYCQLRSCARCGGRAQSKNKAIWACSLCQKRQQ. Residues cysteine 72, cysteine 75, cysteine 88, cysteine 91, cysteine 96, cysteine 99, cysteine 113, and cysteine 116 each contribute to the Zn(2+) site. Disordered stretches follow at residues 128–466 and 582–605; these read KWFQ…DHLN and GGLDMQANRRRDKSLSLSPSRNDH. Residues 172–182 are compositionally biased toward polar residues; that stretch reads NTPNYQNNQQP. 2 stretches are compositionally biased toward low complexity: residues 190–284 and 300–316; these read NHNQ…RNQT and QTPQQQPSQYQNNVGAA. The span at 326-345 shows a compositional bias: basic and acidic residues; sequence QEQHHQQMNEQRTDNNRMRE. Composition is skewed to polar residues over residues 356–367 and 379–389; these read RQPSLEQTTPMN and QRPTFYTGNSE. Positions 395-415 are enriched in low complexity; the sequence is FDGQMQQGSQQNNQNQNQNNR. The PDZ domain maps to 643 to 733; sequence HMILHRTENS…DTSVELIVSR (91 aa). The region spanning 840–962 is the C2 1 domain; sequence IFGRIEVSFV…PLDGEHSLMC (123 aa). 3 disordered regions span residues 1054-1163, 1177-1311, and 1346-1373; these read ENDI…YLGD, GQMT…GGSA, and VGIPGNLSSDRLTEPTPPFLKQASKEST. Positions 1086–1097 are enriched in polar residues; the sequence is WTQNHQRQSGYT. Positions 1112–1121 are enriched in basic residues; the sequence is YNRRQQRRPR. Positions 1129–1154 are enriched in basic and acidic residues; sequence MEREDMYDPTRKHRDDNEYSMRESVR. Positions 1181–1230 are enriched in low complexity; sequence PKQHNQQHQPHPLSQAHQQQQTAGVQPQHHQGFQQQQHPQQPNQQMQQMQ. Residues 1242-1255 are compositionally biased toward polar residues; the sequence is GSETLSVHSTNSMP. The span at 1256–1277 shows a compositional bias: low complexity; the sequence is TTMTTVNRRNMNANNTSNDNTS. Positions 1278–1288 are enriched in polar residues; that stretch reads FAETPTANTNR. Low complexity predominate over residues 1297–1311; that stretch reads NSLASSSSVAGGGSA. The region spanning 1417–1536 is the C2 2 domain; sequence VLGEIQIALM…LGSQPLIGWY (120 aa).

Restricted to discrete puncta in synapse-rich regions of the nervous system including the nerve ring, the ventral nerve cord and the dorsal nerve cord. Localized expression was found in the head.

The protein localises to the synapse. Functionally, regulates the efficiency of a post-docking step of the release pathway. Acts after vesicle docking likely via regulating priming. May regulate the conformational changes in syntaxin. Binding of vesicles via rab-3[GTP] to Rim may signal the presence of a docked synaptic vesicle. Rim may then signal to unc-13 to change the conformation of syntaxin from the closed to the open state. Syntaxin could then engage synaptobrevin on the docked vesicle to form SNARE complexes and to prime the vesicle for release. Not required for the development or the structural organization of synapses. May play a role in regulating entry into the dauer state. In Caenorhabditis elegans, this protein is Rab-3-interacting molecule unc-10.